The sequence spans 453 residues: Ribosomal protein uS12 methylthiotransferase RimO (453 aa).

In terms of domain architecture, MTTase N-terminal spans 5–120; it reads PKVGFVSLGC…VMQAVHSHLP (116 aa). [4Fe-4S] cluster contacts are provided by Cys14, Cys50, Cys79, Cys151, Cys155, and Cys158. One can recognise a Radical SAM core domain in the interval 137–382; sequence LTPRHYAYLK…MEVAEEVSAQ (246 aa). One can recognise a TRAM domain in the interval 385-453; that stretch reads QRKVGKTLKV…ADGHDLWGEV (69 aa).

Belongs to the methylthiotransferase family. RimO subfamily. [4Fe-4S] cluster is required as a cofactor.

It localises to the cytoplasm. It carries out the reaction L-aspartate(89)-[ribosomal protein uS12]-hydrogen + (sulfur carrier)-SH + AH2 + 2 S-adenosyl-L-methionine = 3-methylsulfanyl-L-aspartate(89)-[ribosomal protein uS12]-hydrogen + (sulfur carrier)-H + 5'-deoxyadenosine + L-methionine + A + S-adenosyl-L-homocysteine + 2 H(+). Catalyzes the methylthiolation of an aspartic acid residue of ribosomal protein uS12. This Burkholderia ambifaria (strain ATCC BAA-244 / DSM 16087 / CCUG 44356 / LMG 19182 / AMMD) (Burkholderia cepacia (strain AMMD)) protein is Ribosomal protein uS12 methylthiotransferase RimO.